Reading from the N-terminus, the 471-residue chain is Vanillate/3-O-methylgallate O-demethylase (471 aa).

Residue Tyr31 coordinates substrate. Gln57 contributes to the (6S)-5,6,7,8-tetrahydrofolate binding site. His60 serves as a coordination point for substrate. Residues Gln93 and Val120 each contribute to the (6S)-5,6,7,8-tetrahydrofolate site. Residue Arg122 participates in substrate binding. (6S)-5,6,7,8-tetrahydrofolate-binding residues include Gln165 and Glu215. 247–250 (YPSN) lines the substrate pocket. A (6S)-5,6,7,8-tetrahydrofolate-binding site is contributed by Trp256.

The protein belongs to the GcvT family. Homodimer.

The enzyme catalyses vanillate + (6S)-5,6,7,8-tetrahydrofolate = (6S)-5-methyl-5,6,7,8-tetrahydrofolate + 3,4-dihydroxybenzoate. It carries out the reaction 3-O-methylgallate + (6S)-5,6,7,8-tetrahydrofolate = 3,4,5-trihydroxybenzoate + (6S)-5-methyl-5,6,7,8-tetrahydrofolate. Its pathway is secondary metabolite metabolism; lignin degradation. In terms of biological role, involved in the catabolism of vanillate and syringate. Catalyzes the transfer of a methyl moiety from vanillate or 3-O-methylgallate (3MGA) to tetrahydrofolate, forming protocatechuate (PCA) or gallate, respectively, and methyl-tetrahydrofolate. Has similar activities with both substrates. Cannot use syringate. Uses an ordered, sequential kinetic mechanism. The sequence is that of Vanillate/3-O-methylgallate O-demethylase from Sphingobium sp. (strain NBRC 103272 / SYK-6).